We begin with the raw amino-acid sequence, 147 residues long: 3-dehydroquinate dehydratase (147 aa).

Tyr26 serves as the catalytic Proton acceptor. Substrate is bound by residues Asn77, His83, and Asp90. His103 (proton donor) is an active-site residue. Residues 104–105 and Arg114 each bind substrate; that span reads LS.

It belongs to the type-II 3-dehydroquinase family. Homododecamer.

The catalysed reaction is 3-dehydroquinate = 3-dehydroshikimate + H2O. It functions in the pathway metabolic intermediate biosynthesis; chorismate biosynthesis; chorismate from D-erythrose 4-phosphate and phosphoenolpyruvate: step 3/7. Catalyzes a trans-dehydration via an enolate intermediate. This chain is 3-dehydroquinate dehydratase, found in Proteus mirabilis (strain HI4320).